The following is a 285-amino-acid chain: Nudix hydrolase 15, mitochondrial (285 aa).

Residues 1-23 (MFLLYRRLPSFARTTTTTLLCKS) constitute a mitochondrion transit peptide. M24 carries the post-translational modification N-acetylmethionine. Disordered stretches follow at residues 51–72 (RQYK…TDQE) and 129–152 (THSG…GMTA). The 157-residue stretch at 99–255 (PKRAAVLICL…DKDYMIWGLT (157 aa)) folds into the Nudix hydrolase domain. Residues 140–161 (KAEEDDKDDGMTATREAEEEIG) carry the Nudix box motif. E155 and E159 together coordinate Mg(2+).

This sequence belongs to the Nudix hydrolase family. Mg(2+) is required as a cofactor. Requires Mn(2+) as cofactor. As to expression, expressed in roots, leaves, stems and inflorescences.

It localises to the mitochondrion. Functionally, coenzyme A diphosphatase which mediates the cleavage of oxidized CoA. Can use malonyl-CoA, hexanoyl-CoA, lauroyl-CoA, myristoyl-CoA and palmitoyl-CoA as substrates, but not isobutyryl-CoA or propionyl-CoA. This Arabidopsis thaliana (Mouse-ear cress) protein is Nudix hydrolase 15, mitochondrial (NUDT15).